We begin with the raw amino-acid sequence, 244 residues long: UDP-2,3-diacylglucosamine hydrolase (244 aa).

Mn(2+)-binding residues include D8, H10, D41, N79, and H114. 79-80 (NR) provides a ligand contact to substrate. Residues D122, S160, N164, K167, and H195 each contribute to the substrate site. Residues H195 and H197 each coordinate Mn(2+).

The protein belongs to the LpxH family. Mn(2+) is required as a cofactor.

It is found in the cell inner membrane. It catalyses the reaction UDP-2-N,3-O-bis[(3R)-3-hydroxytetradecanoyl]-alpha-D-glucosamine + H2O = 2-N,3-O-bis[(3R)-3-hydroxytetradecanoyl]-alpha-D-glucosaminyl 1-phosphate + UMP + 2 H(+). The protein operates within glycolipid biosynthesis; lipid IV(A) biosynthesis; lipid IV(A) from (3R)-3-hydroxytetradecanoyl-[acyl-carrier-protein] and UDP-N-acetyl-alpha-D-glucosamine: step 4/6. Its function is as follows. Hydrolyzes the pyrophosphate bond of UDP-2,3-diacylglucosamine to yield 2,3-diacylglucosamine 1-phosphate (lipid X) and UMP by catalyzing the attack of water at the alpha-P atom. Involved in the biosynthesis of lipid A, a phosphorylated glycolipid that anchors the lipopolysaccharide to the outer membrane of the cell. The sequence is that of UDP-2,3-diacylglucosamine hydrolase from Marinobacter nauticus (strain ATCC 700491 / DSM 11845 / VT8) (Marinobacter aquaeolei).